We begin with the raw amino-acid sequence, 325 residues long: Glucosyl-3-phosphoglycerate synthase (325 aa).

UDP-alpha-D-glucose contacts are provided by residues 37-41 (PSLNE), Ser-71, Lys-104, and 124-125 (DS). Residue Asp-126 coordinates Mn(2+). 171–174 (GRVT) is a (2R)-3-phosphoglycerate binding site. Residues 216-219 (YGVE) and 243-248 (RIHDNQ) contribute to the UDP-alpha-D-glucose site. His-245 contributes to the Mn(2+) binding site. Asn-247 provides a ligand contact to (2R)-3-phosphoglycerate.

Belongs to the glycosyltransferase 2 family. As to quaternary structure, homodimer in solution. Requires Co(2+) as cofactor. Mg(2+) is required as a cofactor. It depends on Mn(2+) as a cofactor. The cofactor is Ni(2+). Zn(2+) serves as cofactor.

The enzyme catalyses an NDP-alpha-D-glucose + (2R)-3-phosphoglycerate = (2R)-2-O-(alpha-D-glucopyranosyl)-3-phospho-glycerate + a ribonucleoside 5'-diphosphate + H(+). It carries out the reaction (2R)-3-phosphoglycerate + UDP-alpha-D-glucose = (2R)-2-O-(alpha-D-glucopyranosyl)-3-phospho-glycerate + UDP + H(+). The catalysed reaction is ADP-alpha-D-glucose + (2R)-3-phosphoglycerate = (2R)-2-O-(alpha-D-glucopyranosyl)-3-phospho-glycerate + ADP + H(+). With respect to regulation, inhibited by ADP and EDTA. Involved in the biosynthesis of the compatible solute mannosylglucosylglycerate through a phosphorylating pathway. Catalyzes the transfer of the glucose moiety from a nuleotide sugar such as UDP-alpha-D-glucose to the position 2 of 3-phospho-D-glycerate (3-PGA) to form glucosyl-3-phosphoglycerate (GPG). UDP-glucose is the preferred substrate, but it can be partially replaced by ADP-glucose. This chain is Glucosyl-3-phosphoglycerate synthase, found in Petrotoga mobilis (strain DSM 10674 / SJ95).